Consider the following 385-residue polypeptide: Chaperone protein DnaJ (385 aa).

The region spanning Asp5–Gly72 is the J domain. Residues Arg26–Lys48 are disordered. The segment covering Asp35–Lys48 has biased composition (basic and acidic residues). The CR-type zinc-finger motif lies at Gly145–Gln223. Cys158, Cys161, Cys175, Cys178, Cys197, Cys200, Cys211, and Cys214 together coordinate Zn(2+). CXXCXGXG motif repeat units follow at residues Cys158 to Gly165, Cys175 to Gly182, Cys197 to Gly204, and Cys211 to Gly218. The interval Phe362–Lys385 is disordered.

This sequence belongs to the DnaJ family. Homodimer. Zn(2+) is required as a cofactor.

The protein resides in the cytoplasm. Participates actively in the response to hyperosmotic and heat shock by preventing the aggregation of stress-denatured proteins and by disaggregating proteins, also in an autonomous, DnaK-independent fashion. Unfolded proteins bind initially to DnaJ; upon interaction with the DnaJ-bound protein, DnaK hydrolyzes its bound ATP, resulting in the formation of a stable complex. GrpE releases ADP from DnaK; ATP binding to DnaK triggers the release of the substrate protein, thus completing the reaction cycle. Several rounds of ATP-dependent interactions between DnaJ, DnaK and GrpE are required for fully efficient folding. Also involved, together with DnaK and GrpE, in the DNA replication of plasmids through activation of initiation proteins. In Leptothrix cholodnii (strain ATCC 51168 / LMG 8142 / SP-6) (Leptothrix discophora (strain SP-6)), this protein is Chaperone protein DnaJ.